The sequence spans 212 residues: Thiamine-phosphate synthase (212 aa).

4-amino-2-methyl-5-(diphosphooxymethyl)pyrimidine contacts are provided by residues 40–44 (QFREK) and asparagine 75. Residues aspartate 76 and aspartate 95 each contribute to the Mg(2+) site. Position 113 (serine 113) interacts with 4-amino-2-methyl-5-(diphosphooxymethyl)pyrimidine. Residue 139-141 (TTS) participates in 2-[(2R,5Z)-2-carboxy-4-methylthiazol-5(2H)-ylidene]ethyl phosphate binding. Lysine 142 is a binding site for 4-amino-2-methyl-5-(diphosphooxymethyl)pyrimidine. 2-[(2R,5Z)-2-carboxy-4-methylthiazol-5(2H)-ylidene]ethyl phosphate contacts are provided by residues glycine 171 and 191–192 (IS).

This sequence belongs to the thiamine-phosphate synthase family. Mg(2+) is required as a cofactor.

It catalyses the reaction 2-[(2R,5Z)-2-carboxy-4-methylthiazol-5(2H)-ylidene]ethyl phosphate + 4-amino-2-methyl-5-(diphosphooxymethyl)pyrimidine + 2 H(+) = thiamine phosphate + CO2 + diphosphate. The enzyme catalyses 2-(2-carboxy-4-methylthiazol-5-yl)ethyl phosphate + 4-amino-2-methyl-5-(diphosphooxymethyl)pyrimidine + 2 H(+) = thiamine phosphate + CO2 + diphosphate. It carries out the reaction 4-methyl-5-(2-phosphooxyethyl)-thiazole + 4-amino-2-methyl-5-(diphosphooxymethyl)pyrimidine + H(+) = thiamine phosphate + diphosphate. It functions in the pathway cofactor biosynthesis; thiamine diphosphate biosynthesis; thiamine phosphate from 4-amino-2-methyl-5-diphosphomethylpyrimidine and 4-methyl-5-(2-phosphoethyl)-thiazole: step 1/1. Its function is as follows. Condenses 4-methyl-5-(beta-hydroxyethyl)thiazole monophosphate (THZ-P) and 2-methyl-4-amino-5-hydroxymethyl pyrimidine pyrophosphate (HMP-PP) to form thiamine monophosphate (TMP). In Staphylococcus saprophyticus subsp. saprophyticus (strain ATCC 15305 / DSM 20229 / NCIMB 8711 / NCTC 7292 / S-41), this protein is Thiamine-phosphate synthase.